The chain runs to 487 residues: Protein nucleotidyltransferase YdiU (487 aa).

Glycine 92, arginine 95, lysine 106, aspartate 118, glycine 119, arginine 169, and arginine 176 together coordinate ATP. Aspartate 253 acts as the Proton acceptor in catalysis. Positions 254 and 263 each coordinate Mg(2+). Position 263 (aspartate 263) interacts with ATP.

The protein belongs to the SELO family. Mg(2+) serves as cofactor. Mn(2+) is required as a cofactor.

It catalyses the reaction L-seryl-[protein] + ATP = 3-O-(5'-adenylyl)-L-seryl-[protein] + diphosphate. It carries out the reaction L-threonyl-[protein] + ATP = 3-O-(5'-adenylyl)-L-threonyl-[protein] + diphosphate. The enzyme catalyses L-tyrosyl-[protein] + ATP = O-(5'-adenylyl)-L-tyrosyl-[protein] + diphosphate. The catalysed reaction is L-histidyl-[protein] + UTP = N(tele)-(5'-uridylyl)-L-histidyl-[protein] + diphosphate. It catalyses the reaction L-seryl-[protein] + UTP = O-(5'-uridylyl)-L-seryl-[protein] + diphosphate. It carries out the reaction L-tyrosyl-[protein] + UTP = O-(5'-uridylyl)-L-tyrosyl-[protein] + diphosphate. In terms of biological role, nucleotidyltransferase involved in the post-translational modification of proteins. It can catalyze the addition of adenosine monophosphate (AMP) or uridine monophosphate (UMP) to a protein, resulting in modifications known as AMPylation and UMPylation. This Bordetella pertussis (strain Tohama I / ATCC BAA-589 / NCTC 13251) protein is Protein nucleotidyltransferase YdiU.